Here is a 367-residue protein sequence, read N- to C-terminus: Chorismate synthase (367 aa).

Arginine 48 lines the NADP(+) pocket. Residues 125–127, 243–244, glycine 283, 298–302, and arginine 324 each bind FMN; these read RSS, NA, and KPTSS.

The protein belongs to the chorismate synthase family. Homotetramer. FMNH2 is required as a cofactor.

It carries out the reaction 5-O-(1-carboxyvinyl)-3-phosphoshikimate = chorismate + phosphate. The protein operates within metabolic intermediate biosynthesis; chorismate biosynthesis; chorismate from D-erythrose 4-phosphate and phosphoenolpyruvate: step 7/7. Its function is as follows. Catalyzes the anti-1,4-elimination of the C-3 phosphate and the C-6 proR hydrogen from 5-enolpyruvylshikimate-3-phosphate (EPSP) to yield chorismate, which is the branch point compound that serves as the starting substrate for the three terminal pathways of aromatic amino acid biosynthesis. This reaction introduces a second double bond into the aromatic ring system. The protein is Chorismate synthase of Psychrobacter cryohalolentis (strain ATCC BAA-1226 / DSM 17306 / VKM B-2378 / K5).